A 1785-amino-acid polypeptide reads, in one-letter code: Plexin-2 (1785 aa).

The first 17 residues, 1–17, serve as a signal peptide directing secretion; that stretch reads MLPESVFLLLISHFLRA. The 427-residue stretch at 18-444 folds into the Sema domain; that stretch reads VTQPPFETEG…MPYGIILEEL (427 aa). Topologically, residues 18–1139 are extracellular; it reads VTQPPFETEG…SDHALPSRLS (1122 aa). Asn-66 is a glycosylation site (N-linked (GlcNAc...) asparagine). Disulfide bonds link Cys-84-Cys-91, Cys-118-Cys-126, Cys-247-Cys-349, Cys-263-Cys-300, Cys-318-Cys-336, Cys-447-Cys-464, Cys-453-Cys-487, Cys-456-Cys-473, and Cys-467-Cys-479. N-linked (GlcNAc...) asparagine glycosylation is present at Asn-249. The region spanning 446–488 is the PSI 1 domain; the sequence is TCSHHSSCTECLVSVDPLCQWCHPTQSCTTSARCTSPVTSQCP. 3 N-linked (GlcNAc...) asparagine glycosylation sites follow: Asn-502, Asn-536, and Asn-572. A disulfide bridge connects residues Cys-524 and Cys-544. In terms of domain architecture, PSI 2 spans 577 to 617; sequence DCSGYGTCSSCMSSEYNCAWCSGLHKCSNSCGALEKSKACV. N-linked (GlcNAc...) asparagine glycosylation is found at Asn-679 and Asn-702. Positions 707 to 748 constitute a PSI 3 domain; it reads SCTNLASDCSSCLALSPSLSCGWCNRQCSHECHESKATAVCD. IPT/TIG domains are found at residues 750–837, 840–924, and 928–1040; these read PRID…LYSF, TSIF…PFEY, and PSIS…LSPF. N-linked (GlcNAc...) asparagine glycosylation is found at Asn-864, Asn-886, Asn-984, and Asn-1016. A helical membrane pass occupies residues 1140 to 1160; sequence LLILGLLLFIVVTLTVMCLVF. Residues 1159–1197 are a coiled coil; the sequence is VFKRRRQEREKEYRKIQLQMENLENNVRKECKQAFAELQ. At 1161-1785 the chain is on the cytoplasmic side; sequence KRRRQEREKE…HIYSTISDYE (625 aa).

Belongs to the plexin family. As to quaternary structure, interacts with mab-20. As to expression, expressed predominantly in the central nervous system from embryonic to adult stages. Expressed in early embryos in ventral neuroblasts. Expressed in neurons and in a subset of posterior lateral and ventral epidermal cells following epidermal enclosure. Present in neurons, muscles and weakly expressed in epidermal cells of the larval tail.

The protein localises to the cell membrane. In terms of biological role, involved as a receptor for mab-20/sema-2a in the formation or stabilization of cell-cell contacts at several stages of epithelial morphogenesis. In early embryonic development, required for proper ventral closure of the epidermis. During male tail morphogenesis, involved in precursor cell sorting and in the formation of distinct sensory rays. Involved in axon guidance of SDQL neurons during neurogenesis. Probably in response to stimulation by mab-20, regulates fln-1-mediated remodeling of the actin cytoskeleton and thus axon guidance and/or fasciculation of DD/VD neurons. In Caenorhabditis elegans, this protein is Plexin-2.